The chain runs to 325 residues: Glycerol-3-phosphate dehydrogenase [NAD(P)+] (325 aa).

Residues Ser14, Phe15, Arg35, and Lys109 each contribute to the NADPH site. The sn-glycerol 3-phosphate site is built by Lys109 and Gly137. Residue Ala141 coordinates NADPH. Sn-glycerol 3-phosphate-binding residues include Lys192, Asp247, Ser257, Arg258, and Asn259. Lys192 functions as the Proton acceptor in the catalytic mechanism. An NADPH-binding site is contributed by Arg258. Leu282 and Glu284 together coordinate NADPH.

Belongs to the NAD-dependent glycerol-3-phosphate dehydrogenase family.

The protein resides in the cytoplasm. It catalyses the reaction sn-glycerol 3-phosphate + NAD(+) = dihydroxyacetone phosphate + NADH + H(+). The enzyme catalyses sn-glycerol 3-phosphate + NADP(+) = dihydroxyacetone phosphate + NADPH + H(+). The protein operates within membrane lipid metabolism; glycerophospholipid metabolism. Functionally, catalyzes the reduction of the glycolytic intermediate dihydroxyacetone phosphate (DHAP) to sn-glycerol 3-phosphate (G3P), the key precursor for phospholipid synthesis. The protein is Glycerol-3-phosphate dehydrogenase [NAD(P)+] of Rickettsia conorii (strain ATCC VR-613 / Malish 7).